Reading from the N-terminus, the 664-residue chain is Two-component response regulator ARR2 (664 aa).

Positions Met-1–Ser-21 are disordered. The Response regulatory domain occupies Arg-29–Val-144. Asp-80 bears the 4-aspartylphosphate mark. The tract at residues Trp-151–Lys-215 is disordered. The segment covering Gly-165–Ala-178 has biased composition (basic and acidic residues). Residues Asn-180–Arg-191 show a composition bias toward polar residues. A compositionally biased stretch (acidic residues) spans Glu-200–Glu-209. A Nuclear localization signal motif is present at residues Lys-215–Arg-218. Residues Arg-218–Arg-268 constitute a DNA-binding region (myb-like GARP). The segment covering Ala-554–Thr-567 has biased composition (low complexity). Positions Ala-554–Pro-589 are disordered.

This sequence belongs to the ARR family. Type-B subfamily. In terms of assembly, binds the target DNA as a monomer. Interacts with histidine-containing phosphotransfer proteins. In terms of processing, two-component system major event consists of a His-to-Asp phosphorelay between a sensor histidine kinase (HK) and a response regulator (RR). In plants, the His-to-Asp phosphorelay involves an additional intermediate named Histidine-containing phosphotransfer protein (HPt). This multistep phosphorelay consists of a His-Asp-His-Asp sequential transfer of a phosphate group between first a His and an Asp of the HK protein, followed by the transfer to a conserved His of the HPt protein and finally the transfer to an Asp in the receiver domain of the RR protein. Phosphorylated in response to cytokinin mediated by AHK3. Detected in the whole plant. Predominantly expressed in pollen.

It is found in the nucleus. Its function is as follows. Transcriptional activator that binds specifically to the DNA sequence 5'-[AG]GATT-3'. Functions as a response regulator involved in His-to-Asp phosphorelay signal transduction system. Phosphorylation of the Asp residue in the receiver domain activates the ability of the protein to promote the transcription of target genes. Could directly activate some type-A response regulators in response to cytokinins. Involved in the expression of nuclear genes for components of mitochondrial complex I. Promotes cytokinin-mediated leaf longevity. Involved in the ethylene signaling pathway in an ETR1-dependent manner and in the cytokinin signaling pathway. This is Two-component response regulator ARR2 (ARR2) from Arabidopsis thaliana (Mouse-ear cress).